We begin with the raw amino-acid sequence, 559 residues long: MAAQGFLLIASFLLILLVLAKPLGSGLARLIAAVPLPGVAGIERILWRTLGITDHEMNWRQYLLALLTLNLLGLGILFCLLFWQEWLPLNPQRLPGLSWDLALNTAVSFVTNTNWQAYSGESTLSYFSQMAGLTVQNFLSAATGIAVVFALIRAFTRQNVHTLGNAWQDLVRITLWILFPVALIIALFFIQQGVPQNLSAYQPITTLEGAKQLLPMGPVASQEAIKMLGTNGGGFFNANSSHPFENPTALTNLAQMLAIFLIPAALCFAFGEAAGDRRQGRALLWAMSFIFVVCVAVVMWAEVQGNPHLLAAGADSSVNMEGKETRFGVLASSLFAVVTTAASCGAVNAMHDSFTALGGMVPMWLMQIGEVVFGGVGSGLYGMLLFVLLAVFIAGLMIGRTPEYLGKKIDVREMKMTALAILVTPMLVLLGSALAMMTDAGRSAMLNPGPHGFSEVLYAVSSAANNNGSAFAGLSANSPFWNCLLAFCMFVGRFGVIIPVMAIAGSLVSKKVQPASQGTLATHGALFIGLLIGTVLLVGALTFIPALALGPVAEHFSLP.

Helical transmembrane passes span 5-25 (GFLL…PLGS), 27-47 (LARL…RILW), 63-83 (LLAL…LLFW), 132-152 (GLTV…FALI), 170-190 (LVRI…LFFI), 253-273 (LAQM…FGEA), 283-303 (LLWA…WAEV), 327-347 (FGVL…CGAV), 356-376 (ALGG…FGGV), 379-399 (GLYG…LMIG), 416-436 (MTAL…ALAM), 484-504 (LLAF…MAIA), and 524-544 (GALF…LTFI).

It belongs to the KdpA family. In terms of assembly, the system is composed of three essential subunits: KdpA, KdpB and KdpC.

It is found in the cell inner membrane. Its function is as follows. Part of the high-affinity ATP-driven potassium transport (or Kdp) system, which catalyzes the hydrolysis of ATP coupled with the electrogenic transport of potassium into the cytoplasm. This subunit binds the periplasmic potassium ions and delivers the ions to the membrane domain of KdpB through an intramembrane tunnel. This is Potassium-transporting ATPase potassium-binding subunit from Salmonella heidelberg (strain SL476).